The following is a 253-amino-acid chain: Vitamin B12 import ATP-binding protein BtuD (253 aa).

Residues 1-236 (MTNQLMALNQ…NTLSRVFAAD (236 aa)) enclose the ABC transporter domain. 34 to 41 (GPNGSGKS) is a binding site for ATP.

The protein belongs to the ABC transporter superfamily. Vitamin B12 importer (TC 3.A.1.13.1) family. The complex is composed of two ATP-binding proteins (BtuD), two transmembrane proteins (BtuC) and a solute-binding protein (BtuF).

It is found in the cell inner membrane. It catalyses the reaction an R-cob(III)alamin(out) + ATP + H2O = an R-cob(III)alamin(in) + ADP + phosphate + H(+). Functionally, part of the ABC transporter complex BtuCDF involved in vitamin B12 import. Responsible for energy coupling to the transport system. This chain is Vitamin B12 import ATP-binding protein BtuD, found in Photorhabdus laumondii subsp. laumondii (strain DSM 15139 / CIP 105565 / TT01) (Photorhabdus luminescens subsp. laumondii).